Reading from the N-terminus, the 462-residue chain is MPSCTASTMPGMICKNPDLEFDSLQPCFYPDEDDFYFGGPDSTPPGEDIWKKFELLPTPPLSPSRAFPEHSPEPSNWATEMLLPEADLWGNPAEEDAFGLGGLGGLTPNPVILQDCMWSGFSAREKLERAVNEKLQHGHGPPGASSSCPAPGVGASSSGGRALGGSASAGRTGATLPTDLSHPAAECVDPAVVFPFPVNKRESASVPAAPTSAPATSAVVTSVSVPAVAPVAAPARGSGRPANSGEHKALSTSGEDTLSDSDDEDDEEEDEEEEIDVVTVEKRRSSSNNKAVTTFTITVRPKTSALGLGRAQPGELILKRCVPIHQQHNYAAPSPYVESEDAPPQKKIKSEASPRPLKSVVPPKAKSLSPRNSDSEDSERRRNHNILERQRRNDLRSSFLTLRDHVPELVKNEKAAKVVILKKATEYVHALQANEHQLLLEKEKLQARQQQLLKKIEHARTC.

An interaction with AURKA region spans residues 19 to 47 (LEFDSLQPCFYPDEDDFYFGGPDSTPPGE). The interaction with AURKA and FBXW7 stretch occupies residues 61 to 90 (LSPSRAFPEHSPEPSNWATEMLLPEADLWG). A 9aaTAD motif is present at residues 76 to 85 (NWATEMLLPE). Disordered regions lie at residues 133-177 (EKLQ…ATLP), 232-290 (AAPA…SNNK), and 332-390 (APSP…LERQ). Residues 138-174 (GHGPPGASSSCPAPGVGASSSGGRALGGSASAGRTGA) show a composition bias toward low complexity. The span at 257-276 (TLSDSDDEDDEEEDEEEEID) shows a compositional bias: acidic residues. Phosphoserine; by CK2 is present on residues Ser259 and Ser261. The region spanning 379–431 (ERRRNHNILERQRRNDLRSSFLTLRDHVPELVKNEKAAKVVILKKATEYVHAL) is the bHLH domain. Positions 431–452 (LQANEHQLLLEKEKLQARQQQL) are leucine-zipper.

Efficient DNA binding requires dimerization with another bHLH protein. Binds DNA as a heterodimer with MAX. Interacts with KDM5A, KDM5B and HUWE1. Interacts with MYCNOS. Interacts with AURKA; interaction is phospho-independent and triggers AURKA activation; AURKA competes with FBXW7 for binding to unphosphorylated MYCN but not for binding to unphosphorylated MYCN. Interacts with FBXW7; FBXW7 competes with AURKA for binding to unphosphorylated MYCN but not for binding to phosphorylated MYCN. Post-translationally, phosphorylated by GSK3-beta which may promote its degradation. Phosphorylated by AURKA.

It is found in the nucleus. Positively regulates the transcription of MYCNOS in neuroblastoma cells. The protein is N-myc proto-oncogene protein (Mycn) of Rattus norvegicus (Rat).